The sequence spans 617 residues: Protein fem-1 homolog C (617 aa).

Methionine 1 is modified (N-acetylmethionine). ANK repeat units lie at residues 2-31 (DLKT…KAEV), 40-70 (NGAT…SIEV), 82-111 (EGAP…SVNN), 115-144 (TNST…DLEV), 148-177 (HGHT…DVNR), 181-210 (KGNT…KMEK), and 213-242 (YGMT…TSKT). TPR repeat units follow at residues 245 to 279 (INAL…RYSD) and 338 to 371 (SYYI…QQSN). ANK repeat units follow at residues 481 to 523 (NNFS…DVNV) and 527 to 556 (DDNS…HFDA).

It belongs to the fem-1 family. In terms of assembly, component of a Cul2-RING (CRL2) E3 ubiquitin-protein ligase complex, also named ECS (Elongin BC-CUL2/5-SOCS-box protein) complex, composed of CUL2, Elongin BC (ELOB and ELOC), RBX1 and substrate-specific adapter FEM1C. Widely expressed. Expressed at higher level in testis.

The protein operates within protein modification; protein ubiquitination. Substrate-recognition component of a Cul2-RING (CRL2) E3 ubiquitin-protein ligase complex of the DesCEND (destruction via C-end degrons) pathway, which recognizes a C-degron located at the extreme C terminus of target proteins, leading to their ubiquitination and degradation. The C-degron recognized by the DesCEND pathway is usually a motif of less than ten residues and can be present in full-length proteins, truncated proteins or proteolytically cleaved forms. The CRL2(FEM1C) complex specifically recognizes proteins with an arginine at the C-terminus: recognizes and binds proteins ending with -Lys/Arg-Xaa-Arg and -Lys/Arg-Xaa-Xaa-Arg C-degrons, such as SIL1 or OR51B2, leading to their ubiquitination and degradation. The CRL2(FEM1C) complex mediates ubiquitination and degradation of truncated MSRB1/SEPX1 selenoproteins produced by failed UGA/Sec decoding. Promotes ubiquitination and degradation of SLBP. This is Protein fem-1 homolog C from Mus musculus (Mouse).